Consider the following 434-residue polypeptide: Ribosomal protein uS12 methylthiotransferase RimO (434 aa).

One can recognise an MTTase N-terminal domain in the interval 6–122; it reads NRVFLLSLGC…ILTAIGARYR (117 aa). 6 residues coordinate [4Fe-4S] cluster: C15, C51, C85, C146, C150, and C153. One can recognise a Radical SAM core domain in the interval 132-361; it reads TAPGHTSFLK…MELQEGISEE (230 aa). The 68-residue stretch at 364–431 folds into the TRAM domain; that stretch reads KRLEGREIAV…PYELFGTVLK (68 aa).

This sequence belongs to the methylthiotransferase family. RimO subfamily. It depends on [4Fe-4S] cluster as a cofactor.

It localises to the cytoplasm. It catalyses the reaction L-aspartate(89)-[ribosomal protein uS12]-hydrogen + (sulfur carrier)-SH + AH2 + 2 S-adenosyl-L-methionine = 3-methylsulfanyl-L-aspartate(89)-[ribosomal protein uS12]-hydrogen + (sulfur carrier)-H + 5'-deoxyadenosine + L-methionine + A + S-adenosyl-L-homocysteine + 2 H(+). Its function is as follows. Catalyzes the methylthiolation of an aspartic acid residue of ribosomal protein uS12. This chain is Ribosomal protein uS12 methylthiotransferase RimO, found in Chlorobium phaeovibrioides (strain DSM 265 / 1930) (Prosthecochloris vibrioformis (strain DSM 265)).